Reading from the N-terminus, the 556-residue chain is Zinc finger protein 18 (556 aa).

The SCAN box domain maps to 41-123 (RQLFRQFRYQ…TLVESLKGDP (83 aa)). Residues 169–195 (QDLPLQNTSSAPGELLSHGVKEESDLE) form a disordered region. A KRAB domain is found at 218–291 (EVGTALLPSL…HLHSAEKMAR (74 aa)). C2H2-type zinc fingers lie at residues 415–437 (PTCR…QRTH), 443–465 (FHCR…QRTH), 471–493 (CKCD…EKIH), 499–521 (YKCP…QRVH), and 527–549 (YKCT…QRSH).

The protein belongs to the krueppel C2H2-type zinc-finger protein family.

The protein localises to the nucleus. Its function is as follows. May be involved in transcriptional regulation. This is Zinc finger protein 18 (Znf18) from Rattus norvegicus (Rat).